A 1887-amino-acid polypeptide reads, in one-letter code: Protein TIC 214 (1887 aa).

6 helical membrane passes run 18–38, 64–84, 87–107, 124–144, 172–192, and 221–241; these read IINS…FSIG, FITG…HLAL, PHTI…WNNH, LSIQ…HFIL, VGWL…LVWI, and IFSI…PSPI. 3 disordered regions span residues 248-300, 785-805, and 1569-1603; these read EASK…EGWD, REEQ…DNKR, and LPSN…NLSP. Acidic residues predominate over residues 256-268; sequence VESEEERDVEIET. Positions 1578-1597 are enriched in basic and acidic residues; that stretch reads RSQETKEPPSQRERGSDIEN.

It belongs to the TIC214 family. In terms of assembly, part of the Tic complex.

Its subcellular location is the plastid. The protein resides in the chloroplast inner membrane. Its function is as follows. Involved in protein precursor import into chloroplasts. May be part of an intermediate translocation complex acting as a protein-conducting channel at the inner envelope. The polypeptide is Protein TIC 214 (Solanum tuberosum (Potato)).